Here is a 274-residue protein sequence, read N- to C-terminus: 3',5'-cyclic adenosine monophosphate phosphodiesterase CpdA (274 aa).

Fe cation-binding residues include Asp-21, His-23, Asp-63, Asn-93, His-163, His-202, and His-204. AMP-binding positions include His-23, Asp-63, and 93–94; that span reads NH. AMP is bound at residue His-204.

The protein belongs to the cyclic nucleotide phosphodiesterase class-III family. Fe(2+) serves as cofactor.

It catalyses the reaction 3',5'-cyclic AMP + H2O = AMP + H(+). Functionally, hydrolyzes cAMP to 5'-AMP. Plays an important regulatory role in modulating the intracellular concentration of cAMP, thereby influencing cAMP-dependent processes. This Vibrio vulnificus (strain CMCP6) protein is 3',5'-cyclic adenosine monophosphate phosphodiesterase CpdA.